The chain runs to 326 residues: Iron-sulfur cluster assembly SufBD family protein PH0883 (326 aa).

This sequence belongs to the iron-sulfur cluster assembly SufBD family.

This Pyrococcus horikoshii (strain ATCC 700860 / DSM 12428 / JCM 9974 / NBRC 100139 / OT-3) protein is Iron-sulfur cluster assembly SufBD family protein PH0883.